A 281-amino-acid chain; its full sequence is Fructose-bisphosphate aldolase class 1 (281 aa).

Lys-191 functions as the Schiff-base intermediate with dihydroxyacetone-P in the catalytic mechanism.

This sequence belongs to the DeoC/FbaB aldolase family. In terms of assembly, homooctamer.

Its subcellular location is the cytoplasm. It catalyses the reaction beta-D-fructose 1,6-bisphosphate = D-glyceraldehyde 3-phosphate + dihydroxyacetone phosphate. With respect to regulation, activated by citrate. The polypeptide is Fructose-bisphosphate aldolase class 1 (fba) (Pyrococcus abyssi (strain GE5 / Orsay)).